Consider the following 450-residue polypeptide: Glucose-6-phosphate isomerase (450 aa).

Glutamate 291 (proton donor) is an active-site residue. Active-site residues include histidine 312 and lysine 426.

It belongs to the GPI family.

It localises to the cytoplasm. The enzyme catalyses alpha-D-glucose 6-phosphate = beta-D-fructose 6-phosphate. It participates in carbohydrate biosynthesis; gluconeogenesis. It functions in the pathway carbohydrate degradation; glycolysis; D-glyceraldehyde 3-phosphate and glycerone phosphate from D-glucose: step 2/4. Functionally, catalyzes the reversible isomerization of glucose-6-phosphate to fructose-6-phosphate. The polypeptide is Glucose-6-phosphate isomerase (Clostridium botulinum (strain Hall / ATCC 3502 / NCTC 13319 / Type A)).